The chain runs to 203 residues: Venom allergen 5 (203 aa).

Cystine bridges form between C4–C15, C7–C100, C25–C93, and C169–C186. In terms of domain architecture, SCP spans 45–188 (KRHNEFRQKV…WHTHYLVCNY (144 aa)).

It belongs to the CRISP family. Venom allergen 5-like subfamily. In terms of tissue distribution, expressed by the venom gland.

The protein resides in the secreted. This is Venom allergen 5 from Dolichovespula arenaria (Yellow hornet).